Reading from the N-terminus, the 523-residue chain is Cytoplasmic dynein 1 light intermediate chain 1 (523 aa).

Residues 1 to 25 are disordered; it reads MAAVGRVGSFGSSPPGLASTYASGP. 74–81 serves as a coordination point for ATP; sequence GEDGAGKT. Disordered regions lie at residues 200–219, 387–434, and 457–523; these read PGEDFPASPQRRTTGAQEDR, PPTA…DPNM, and GSPG…GEAS. Serine 207 is subject to Phosphoserine. The residue at position 213 (threonine 213) is a Phosphothreonine. A phosphoserine mark is found at serine 398 and serine 405. Threonine 408 bears the Phosphothreonine mark. Phosphoserine is present on residues serine 412, serine 419, serine 421, and serine 427. The span at 412–421 shows a compositional bias: low complexity; it reads SVSSNVASVS. The segment covering 458–473 has biased composition (gly residues); that stretch reads SPGGPGVGGSPGGGAA. Low complexity predominate over residues 474–485; that stretch reads GASPSLPPSAKK. Serine 486 and serine 510 each carry phosphoserine. The span at 506–523 shows a compositional bias: low complexity; that stretch reads PASVSPTTPTSPTEGEAS. A phosphothreonine mark is found at threonine 512, threonine 513, and threonine 515. Phosphoserine is present on serine 516.

This sequence belongs to the dynein light intermediate chain family. As to quaternary structure, homodimer. The cytoplasmic dynein 1 complex consists of two catalytic heavy chains (HCs) and a number of non-catalytic subunits presented by intermediate chains (ICs), light intermediate chains (LICs) and light chains (LCs); the composition seems to vary in respect to the IC, LIC and LC composition. The heavy chain homodimer serves as a scaffold for the probable homodimeric assembly of the respective non-catalytic subunits. The ICs and LICs bind directly to the HC dimer and the LCs assemble on the IC dimer. Self-associates. Interacts with DYNC1H1; DYNC1LI1 and DYNC1LI2 bind mutually exclusive to DYNC1H1. Interacts with PCNT. Forms a complex with RAB11FIP3 and RAB11A1; the interaction between DYNC1LI1 and RAB11FIP3 is direct and induces DYNC1LI1 localization onto endosomal membrane; the complex regulates endocytic trafficking. Interacts with RUFY3. In terms of processing, phosphorylated during mitosis but not in interphase.

Its subcellular location is the cytoplasm. It is found in the chromosome. The protein localises to the centromere. The protein resides in the kinetochore. It localises to the cytoskeleton. Its subcellular location is the spindle pole. It is found in the recycling endosome membrane. Its function is as follows. Acts as one of several non-catalytic accessory components of the cytoplasmic dynein 1 complex that are thought to be involved in linking dynein to cargos and to adapter proteins that regulate dynein function. Cytoplasmic dynein 1 acts as a motor for the intracellular retrograde motility of vesicles and organelles along microtubules. May play a role in binding dynein to membranous organelles or chromosomes. Probably involved in the microtubule-dependent transport of pericentrin. Is required for progress through the spindle assembly checkpoint. The phosphorylated form appears to be involved in the selective removal of MAD1L1 and MAD1L2 but not BUB1B from kinetochores. Forms a functional Rab11/RAB11FIP3/dynein complex onto endosomal membrane that regulates the movement of peripheral sorting endosomes (SE) along microtubule tracks toward the microtubule organizing center/centrosome, generating the endosomal recycling compartment (ERC). In Mus musculus (Mouse), this protein is Cytoplasmic dynein 1 light intermediate chain 1 (Dync1li1).